The chain runs to 533 residues: MAFRRVLTTVILFCYLLISSQSIEFKNSQKPHKIQGPIKTIVVVVMENRSFDHILGWLKSTRPEIDGLTGKESNPLNVSDPNSKKIFVSDDAVFVDMDPGHSFQAIREQIFGSNDTSGDPKMNGFAQQSESMEPGMAKNVMSGFKPEVLPVYTELANEFGVFDRWFASVPTSTQPNRFYVHSATSHGCSSNVKKDLVKGFPQKTIFDSLDENGLSFGIYYQNIPATFFFKSLRRLKHLVKFHSYALKFKLDAKLGKLPNYSVVEQRYFDIDLFPANDDHPSHDVAAGQRFVKEVYETLRSSPQWKEMALLITYDEHGGFYDHVPTPVKGVPNPDGIIGPDPFYFGFDRLGVRVPTFLISPWIEKGTVIHEPEGPTPHSQFEHSSIPATVKKLFNLKSHFLTKRDAWAGTFEKYFRIRDSPRQDCPEKLPEVKLSLRPWGAKEDSKLSEFQVELIQLASQLVGDHLLNSYPDIGKNMTVSEGNKYAEDAVQKFLEAGMAALEAGADENTIVTMRPSLTTRTSPSEGTNKYIGSY.

The N-terminal stretch at 1-22 (MAFRRVLTTVILFCYLLISSQS) is a signal peptide.

It belongs to the bacterial phospholipase C family. Expressed in roots, leaves, stems, flowers and siliques.

Its subcellular location is the secreted. The protein is Non-specific phospholipase C1 (NPC1) of Arabidopsis thaliana (Mouse-ear cress).